Consider the following 295-residue polypeptide: G1/S-specific cyclin-D1 (295 aa).

Residues 28-152 (LRAMLKAEET…LLVNKLKWNL (125 aa)) enclose the Cyclin N-terminal domain. The segment at 262–295 (AQQNMDPKAAEEEEEEEEEVDLACTPTDVRDVDI) is disordered. A Glycyl lysine isopeptide (Lys-Gly) (interchain with G-Cter in ubiquitin) cross-link involves residue lysine 269. A compositionally biased stretch (acidic residues) spans 272-282 (EEEEEEEEEVD). The residue at position 286 (threonine 286) is a Phosphothreonine.

This sequence belongs to the cyclin family. Cyclin D subfamily. As to quaternary structure, interacts with either CDK4 or CDK6 protein kinase to form a serine/threonine kinase holoenzyme complex. The cyclin subunit imparts substrate specificity to the complex. Component of the ternary complex CCND1/CDK4/CDKN1B required for nuclear translocation and modulation of CDK4-mediated kinase activity. Interacts directly with CDKN1B. Can form similar complexes with either CDKN1A or CDKN2A. Interacts with UHRF2; the interaction ubiquitinates CCND1 and appears to occur independently of phosphorylation. Interacts with USP2. Interacts (via cyclin N-terminal domain) with INSM1 (via N-terminal region); the interaction competes with the binding of CCND1 to CDK4 during cell cycle progression and inhibits CDK4 activity. Interacts with CDK4; the interaction is prevented with the binding of CCND1 to INSM1 during cell cycle progression. Phosphorylation at Thr-286 by MAP kinases is required for ubiquitination and degradation by the DCX(AMBRA1) complex. It also plays an essential role for recognition by the FBXO31 component of SCF (SKP1-cullin-F-box) protein ligase complex following DNA damage. Post-translationally, ubiquitinated at Lys-269 by the DCX(AMBRA1) complex during the transition from G1 to S cell phase, leading to its degradation: ubiquitination is dependent on Thr-286 phosphorylation. The DCX(AMBRA1) complex represents the major regulator of CCND1 stability during the G1/S transition. Also ubiquitinated by the SCF(FBXO4) and Cul7-RING(FBXW8) ubiquitin-protein ligase complexes. Following DNA damage it is ubiquitinated by the SCF(FBXO31) protein ligase complex. SCF(FBXO31) ubiquitination is dependent on Thr-286 phosphorylation. Ubiquitinated also by UHRF2 apparently in a phosphorylation-independent manner. Ubiquitination leads to its degradation and G1 arrest. Deubiquitinated by USP2; leading to its stabilization.

The protein resides in the nucleus. It localises to the cytoplasm. The protein localises to the nucleus membrane. Functionally, regulatory component of the cyclin D1-CDK4 (DC) complex that phosphorylates and inhibits members of the retinoblastoma (RB) protein family including RB1 and regulates the cell-cycle during G(1)/S transition. Phosphorylation of RB1 allows dissociation of the transcription factor E2F from the RB/E2F complex and the subsequent transcription of E2F target genes which are responsible for the progression through the G(1) phase. Hypophosphorylates RB1 in early G(1) phase. Cyclin D-CDK4 complexes are major integrators of various mitogenenic and antimitogenic signals. Also a substrate for SMAD3, phosphorylating SMAD3 in a cell-cycle-dependent manner and repressing its transcriptional activity. Component of the ternary complex, cyclin D1/CDK4/CDKN1B, required for nuclear translocation and activity of the cyclin D-CDK4 complex. Exhibits transcriptional corepressor activity with INSM1 on the NEUROD1 and INS promoters in a cell cycle-independent manner. The sequence is that of G1/S-specific cyclin-D1 from Homo sapiens (Human).